The primary structure comprises 291 residues: Formamidopyrimidine-DNA glycosylase (291 aa).

Proline 2 acts as the Schiff-base intermediate with DNA in catalysis. The Proton donor role is filled by glutamate 3. The active-site Proton donor; for beta-elimination activity is the lysine 60. Positions 97, 116, and 161 each coordinate DNA. The segment at 246–280 (WVYNRAGEPCRVCGMPIQRIRLAGRSSHFCSECQT) adopts an FPG-type zinc-finger fold. Arginine 270 (proton donor; for delta-elimination activity) is an active-site residue.

Belongs to the FPG family. In terms of assembly, monomer. Zn(2+) is required as a cofactor.

The enzyme catalyses Hydrolysis of DNA containing ring-opened 7-methylguanine residues, releasing 2,6-diamino-4-hydroxy-5-(N-methyl)formamidopyrimidine.. The catalysed reaction is 2'-deoxyribonucleotide-(2'-deoxyribose 5'-phosphate)-2'-deoxyribonucleotide-DNA = a 3'-end 2'-deoxyribonucleotide-(2,3-dehydro-2,3-deoxyribose 5'-phosphate)-DNA + a 5'-end 5'-phospho-2'-deoxyribonucleoside-DNA + H(+). Involved in base excision repair of DNA damaged by oxidation or by mutagenic agents. Acts as a DNA glycosylase that recognizes and removes damaged bases. Has a preference for oxidized purines, such as 7,8-dihydro-8-oxoguanine (8-oxoG). Has AP (apurinic/apyrimidinic) lyase activity and introduces nicks in the DNA strand. Cleaves the DNA backbone by beta-delta elimination to generate a single-strand break at the site of the removed base with both 3'- and 5'-phosphates. The sequence is that of Formamidopyrimidine-DNA glycosylase from Nostoc punctiforme (strain ATCC 29133 / PCC 73102).